The primary structure comprises 295 residues: Bifunctional protein FolD (295 aa).

Residues 169–171 (GRG), Thr196, and Val237 each bind NADP(+).

Belongs to the tetrahydrofolate dehydrogenase/cyclohydrolase family. In terms of assembly, homodimer.

The enzyme catalyses (6R)-5,10-methylene-5,6,7,8-tetrahydrofolate + NADP(+) = (6R)-5,10-methenyltetrahydrofolate + NADPH. It catalyses the reaction (6R)-5,10-methenyltetrahydrofolate + H2O = (6R)-10-formyltetrahydrofolate + H(+). Its pathway is one-carbon metabolism; tetrahydrofolate interconversion. Catalyzes the oxidation of 5,10-methylenetetrahydrofolate to 5,10-methenyltetrahydrofolate and then the hydrolysis of 5,10-methenyltetrahydrofolate to 10-formyltetrahydrofolate. This Kineococcus radiotolerans (strain ATCC BAA-149 / DSM 14245 / SRS30216) protein is Bifunctional protein FolD.